Reading from the N-terminus, the 134-residue chain is B3 domain-containing protein At1g16640 (134 aa).

The TF-B3 DNA-binding region spans 7 to 100 (VQFMKPFISE…TFYVIIYGHN (94 aa)).

The protein localises to the nucleus. This chain is B3 domain-containing protein At1g16640, found in Arabidopsis thaliana (Mouse-ear cress).